We begin with the raw amino-acid sequence, 303 residues long: Coenzyme PQQ synthesis protein B (303 aa).

This sequence belongs to the PqqB family.

The protein operates within cofactor biosynthesis; pyrroloquinoline quinone biosynthesis. May be involved in the transport of PQQ or its precursor to the periplasm. The chain is Coenzyme PQQ synthesis protein B from Pseudomonas putida (strain ATCC 47054 / DSM 6125 / CFBP 8728 / NCIMB 11950 / KT2440).